The sequence spans 678 residues: Glycine--tRNA ligase beta subunit (678 aa).

This sequence belongs to the class-II aminoacyl-tRNA synthetase family. As to quaternary structure, tetramer of two alpha and two beta subunits.

The protein resides in the cytoplasm. The catalysed reaction is tRNA(Gly) + glycine + ATP = glycyl-tRNA(Gly) + AMP + diphosphate. The sequence is that of Glycine--tRNA ligase beta subunit from Streptococcus pneumoniae (strain ATCC BAA-255 / R6).